Reading from the N-terminus, the 508-residue chain is Serine carboxypeptidase 3 (508 aa).

An N-terminal signal peptide occupies residues 1–19 (MVTTPRLVSLLLLLALCAA). Residues 20–80 (AAGALRLPPD…PGQLLERRVT (61 aa)) constitute a propeptide that is removed on maturation. Residues 48 to 67 (PKDSSSSSGRHGARVGEGNE) form a disordered region. At L81 the chain carries Blocked amino end (Leu). 3 disulfides stabilise this stretch: C133-C373, C301-C316, and C339-C344. A glycan (N-linked (GlcNAc...) asparagine) is linked at N151. Residue S223 is part of the active site. The active site involves D411. Position 414 (C414) interacts with substrate. The active site involves H468. Residues 492–508 (EAVPEEESSTTSFYAAM) constitute a propeptide that is removed on maturation.

The protein belongs to the peptidase S10 family. In terms of assembly, monomer.

The protein resides in the secreted. It catalyses the reaction Release of a C-terminal amino acid with broad specificity.. Its activity is regulated as follows. Inhibited by mercuric ions. The polypeptide is Serine carboxypeptidase 3 (CBP3) (Hordeum vulgare (Barley)).